Here is a 417-residue protein sequence, read N- to C-terminus: UDP-N-acetylglucosamine 1-carboxyvinyltransferase (417 aa).

Residue 22 to 23 coordinates phosphoenolpyruvate; that stretch reads KN. Arg-94 is a UDP-N-acetyl-alpha-D-glucosamine binding site. Cys-118 serves as the catalytic Proton donor. A 2-(S-cysteinyl)pyruvic acid O-phosphothioketal modification is found at Cys-118. Residues 123–127, Asp-306, and Ile-328 each bind UDP-N-acetyl-alpha-D-glucosamine; that span reads RPIDQ.

It belongs to the EPSP synthase family. MurA subfamily.

It localises to the cytoplasm. The enzyme catalyses phosphoenolpyruvate + UDP-N-acetyl-alpha-D-glucosamine = UDP-N-acetyl-3-O-(1-carboxyvinyl)-alpha-D-glucosamine + phosphate. The protein operates within cell wall biogenesis; peptidoglycan biosynthesis. Functionally, cell wall formation. Adds enolpyruvyl to UDP-N-acetylglucosamine. This is UDP-N-acetylglucosamine 1-carboxyvinyltransferase from Clostridium botulinum (strain ATCC 19397 / Type A).